The sequence spans 999 residues: Transcription-repair-coupling factor (999 aa).

A Helicase ATP-binding domain is found at 499-656 (DLSSHRVMDR…LSQIKGISSL (158 aa)). An ATP-binding site is contributed by 512-519 (GDVGFGKT). Positions 609-612 (DEEH) match the DEEH box motif. Residues 677-833 (LLKEIIYREL…SVAYHDLEIR (157 aa)) form the Helicase C-terminal domain.

It in the N-terminal section; belongs to the UvrB family. The protein in the C-terminal section; belongs to the helicase family. RecG subfamily.

It localises to the cytoplasm. Its function is as follows. Couples transcription and DNA repair by recognizing RNA polymerase (RNAP) stalled at DNA lesions. Mediates ATP-dependent release of RNAP and its truncated transcript from the DNA, and recruitment of nucleotide excision repair machinery to the damaged site. This is Transcription-repair-coupling factor from Helicobacter pylori (strain ATCC 700392 / 26695) (Campylobacter pylori).